Here is a 656-residue protein sequence, read N- to C-terminus: Hemocyanin subunit A (656 aa).

Positions 1–18 are cleaved as a signal peptide; it reads MWSLALATLFVLGTVIRA. 3 residues coordinate Cu cation: H197, H201, and H227. Residue N313 is glycosylated (N-linked (GlcNAc...) asparagine). H348, H352, and H388 together coordinate Cu cation. A disulfide bridge links C558 with C606.

This sequence belongs to the tyrosinase family. Hemocyanin subfamily. 36-chain polymer consisting of 6 hexamers, each of which includes 4 different chains, A, B, C and D. Hemolymph.

It is found in the secreted. The protein localises to the extracellular space. Hemocyanins are copper-containing oxygen carriers occurring freely dissolved in the hemolymph of many mollusks and arthropods. This Scutigera coleoptrata (House centipede) protein is Hemocyanin subunit A (HCA).